Consider the following 332-residue polypeptide: Aquaporin-7-1 (332 aa).

Residues Met1–Glu66 are Cytoplasmic-facing. A helical transmembrane segment spans residues Phe67–Ser87. The Extracellular portion of the chain corresponds to Thr88–Phe100. The helical transmembrane segment at Leu101–Ile121 threads the bilayer. The Cytoplasmic portion of the chain corresponds to Ser122–Arg144. The short motif at Asn127–Ala129 is the NPA 1 element. A helical membrane pass occupies residues Val145–Ala165. Residues Asn166–Gln199 are Extracellular-facing. A helical transmembrane segment spans residues Val200–Leu220. At Thr221 to Asn230 the chain is on the cytoplasmic side. Residues Gly231–Glu251 form a helical membrane-spanning segment. At Thr252–Gln283 the chain is on the extracellular side. The NPA 2 signature appears at Asn257–Ala259. The chain crosses the membrane as a helical span at residues Tyr284–Tyr304. Residues Asp305 to Val332 are Cytoplasmic-facing.

The protein belongs to the MIP/aquaporin (TC 1.A.8) family.

The protein resides in the membrane. It catalyses the reaction H2O(in) = H2O(out). In terms of biological role, water channel required to facilitate the transport of water across membranes. Does not mediate the transport carbon dioxide across the membrane. This is Aquaporin-7-1 from Laccaria bicolor (Bicoloured deceiver).